Here is a 250-residue protein sequence, read N- to C-terminus: 2,3-bisphosphoglycerate-dependent phosphoglycerate mutase (250 aa).

Residues Arg-10 to Asn-17, Thr-23 to Gly-24, Arg-62, Glu-89 to Tyr-92, Lys-100, Arg-116 to Arg-117, and Gly-185 to Asn-186 each bind substrate. Residue His-11 is the Tele-phosphohistidine intermediate of the active site. Residue Glu-89 is the Proton donor/acceptor of the active site.

Belongs to the phosphoglycerate mutase family. BPG-dependent PGAM subfamily. In terms of assembly, homodimer.

It carries out the reaction (2R)-2-phosphoglycerate = (2R)-3-phosphoglycerate. It functions in the pathway carbohydrate degradation; glycolysis; pyruvate from D-glyceraldehyde 3-phosphate: step 3/5. In terms of biological role, catalyzes the interconversion of 2-phosphoglycerate and 3-phosphoglycerate. The protein is 2,3-bisphosphoglycerate-dependent phosphoglycerate mutase of Escherichia coli O139:H28 (strain E24377A / ETEC).